Here is a 912-residue protein sequence, read N- to C-terminus: Protein translocase subunit SecA (912 aa).

ATP-binding positions include glutamine 87, glycine 105–threonine 109, and aspartate 508. The disordered stretch occupies residues aspartate 865–serine 912. The Zn(2+) site is built by cysteine 896, cysteine 898, cysteine 907, and histidine 908. The segment covering lysine 902–serine 912 has biased composition (basic residues).

The protein belongs to the SecA family. In terms of assembly, monomer and homodimer. Part of the essential Sec protein translocation apparatus which comprises SecA, SecYEG and auxiliary proteins SecDF-YajC and YidC. Zn(2+) is required as a cofactor.

It is found in the cell inner membrane. The protein localises to the cytoplasm. The enzyme catalyses ATP + H2O + cellular proteinSide 1 = ADP + phosphate + cellular proteinSide 2.. Functionally, part of the Sec protein translocase complex. Interacts with the SecYEG preprotein conducting channel. Has a central role in coupling the hydrolysis of ATP to the transfer of proteins into and across the cell membrane, serving both as a receptor for the preprotein-SecB complex and as an ATP-driven molecular motor driving the stepwise translocation of polypeptide chains across the membrane. This is Protein translocase subunit SecA from Xanthomonas oryzae pv. oryzae (strain MAFF 311018).